The primary structure comprises 522 residues: Maturase K (522 aa).

It belongs to the intron maturase 2 family. MatK subfamily.

It localises to the plastid. The protein localises to the chloroplast. Functionally, usually encoded in the trnK tRNA gene intron. Probably assists in splicing its own and other chloroplast group II introns. The protein is Maturase K of Micranthus junceus (Micranthus plantagineus var. junceus).